We begin with the raw amino-acid sequence, 548 residues long: uncharacterized protein (548 aa).

Phosphoserine occurs at positions 19 and 25. The residue at position 47 (Thr47) is a Phosphothreonine.

This is an uncharacterized protein from Schizosaccharomyces pombe (strain 972 / ATCC 24843) (Fission yeast).